We begin with the raw amino-acid sequence, 145 residues long: Small ribosomal subunit protein uS9 (145 aa).

Positions 1 to 13 (MATDQHSNKSNVS) are enriched in polar residues. Positions 1–24 (MATDQHSNKSNVSAARKPLSPSPT) are disordered.

This sequence belongs to the universal ribosomal protein uS9 family.

It localises to the cytoplasm. This Lupinus polyphyllus (Large-leaved lupine) protein is Small ribosomal subunit protein uS9 (RPS16).